The sequence spans 659 residues: Beta-galactosidase BgaA (659 aa).

R103 serves as a coordination point for substrate. Residue C107 participates in Zn(2+) binding. N141 contributes to the substrate binding site. E142 (proton donor) is an active-site residue. Zn(2+)-binding residues include C148, C150, and C153. The active-site Nucleophile is E298. W307 lines the substrate pocket.

This sequence belongs to the glycosyl hydrolase 42 family. In terms of assembly, dimer.

The enzyme catalyses Hydrolysis of terminal non-reducing beta-D-galactose residues in beta-D-galactosides.. Inhibited by Cu(2+), Hg(2+) and Zn(2+). No effect with Ca(2+), Mg(2+), Mn(2+) or excess EDTA (10 mM). Involved in plant cell wall degradation in cooperation with cellulosome. Hydrolyzes both p-nitrophenyl-alpha-L-arabinopyranoside (pNPAp) and p-nitrophenyl-beta-D-galactopyranoside (pNPGp), with higher activity for pNPAp. Shows hydrolysis activity against p-nitrophenyl-beta-D-fucopyranoside (pNPFp), but not against p-nitrophenyl-alpha-L-arabinofuranoside (pNPAf), o-nitrophenyl-beta-D-galactopyranoside (oNPGp), p-nitrophenyl-beta-D-xylopyranoside (pNPXp), p-nitrophenyl-beta-D-glucopyranoside (pNPGLp), p-nitrophenyl-beta-D-cellobiopyranoside (pNPCp), p-nitrophenyl-beta-lactopyranoside (pNPLp) or p-nitrophenyl-alpha-galactopyranoside (pNPalphaGp). No detectable activity against arabinan or arabinoxylan, but activity against arabinogalactan can be detected. Increases degradation activity of alpha-L-arabinofuranosidase (ArfA) and endo-1,4-beta-xylanase (XynA) when corn fiber gum and corn stem powder are used as substrates. In Clostridium cellulovorans (strain ATCC 35296 / DSM 3052 / OCM 3 / 743B), this protein is Beta-galactosidase BgaA (bgaA).